The following is a 435-amino-acid chain: T-cell defective protein 2 (435 aa).

Residues 65-146 are disordered; that stretch reads NASTSFQSQP…KTPDSLRKSI (82 aa). Residues 322–352 are a coiled coil; sequence TKISAKKEKEQKKSAAKEAALKEAKEKEMRI. The disordered stretch occupies residues 393 to 419; the sequence is FFKANPPPAPRAPQAPELASGPRRIPT.

As to expression, strongly expressed in the cytoplasm of the pharynx muscle cells and several head neurons, probably the IL1s or IL2s, throughout development. Also expressed in some other unidentified neurons in the tail region. Weakly expressed in the nuclei of the T-cells and the T-cell daughters. Not expressed in gonads and in P12 cell.

It localises to the nucleus. The protein localises to the cytoplasm. In terms of biological role, may act synergistically with the Wnt pathways to control T-cell fate specification, gonad development, and P12 cell fate specification. Required for the distribution of pop-1 and tlp-1 proteins. In Caenorhabditis elegans, this protein is T-cell defective protein 2 (tcl-2).